A 422-amino-acid chain; its full sequence is 4-hydroxy-3-methylbut-2-en-1-yl diphosphate synthase (flavodoxin) (422 aa).

4 residues coordinate [4Fe-4S] cluster: C316, C319, C362, and E369.

Belongs to the IspG family. [4Fe-4S] cluster is required as a cofactor.

The catalysed reaction is (2E)-4-hydroxy-3-methylbut-2-enyl diphosphate + oxidized [flavodoxin] + H2O + 2 H(+) = 2-C-methyl-D-erythritol 2,4-cyclic diphosphate + reduced [flavodoxin]. Its pathway is isoprenoid biosynthesis; isopentenyl diphosphate biosynthesis via DXP pathway; isopentenyl diphosphate from 1-deoxy-D-xylulose 5-phosphate: step 5/6. Functionally, converts 2C-methyl-D-erythritol 2,4-cyclodiphosphate (ME-2,4cPP) into 1-hydroxy-2-methyl-2-(E)-butenyl 4-diphosphate. The chain is 4-hydroxy-3-methylbut-2-en-1-yl diphosphate synthase (flavodoxin) from Ehrlichia ruminantium (strain Gardel).